The following is a 1106-amino-acid chain: Probable NAD-specific glutamate dehydrogenase (1106 aa).

K654 is an active-site residue.

This sequence belongs to the Glu/Leu/Phe/Val dehydrogenases family. In terms of assembly, homotetramer.

Its subcellular location is the cytoplasm. It carries out the reaction L-glutamate + NAD(+) + H2O = 2-oxoglutarate + NH4(+) + NADH + H(+). NAD(+)-dependent glutamate dehydrogenase which degrades glutamate to ammonia and alpha-ketoglutarate. This Schizosaccharomyces pombe (strain 972 / ATCC 24843) (Fission yeast) protein is Probable NAD-specific glutamate dehydrogenase (gdh2).